Here is a 146-residue protein sequence, read N- to C-terminus: Holo-[acyl-carrier-protein] synthase (146 aa).

Mg(2+) is bound by residues aspartate 9 and glutamate 63.

Belongs to the P-Pant transferase superfamily. AcpS family. Mg(2+) is required as a cofactor.

It localises to the cytoplasm. The enzyme catalyses apo-[ACP] + CoA = holo-[ACP] + adenosine 3',5'-bisphosphate + H(+). Transfers the 4'-phosphopantetheine moiety from coenzyme A to a Ser of acyl-carrier-protein. This Burkholderia ambifaria (strain ATCC BAA-244 / DSM 16087 / CCUG 44356 / LMG 19182 / AMMD) (Burkholderia cepacia (strain AMMD)) protein is Holo-[acyl-carrier-protein] synthase.